The sequence spans 172 residues: Inorganic pyrophosphatase (172 aa).

3 residues coordinate substrate: K26, R40, and Y52. Residues D62, D67, and D99 each contribute to the Mg(2+) site. Y138 contributes to the substrate binding site.

The protein belongs to the PPase family. As to quaternary structure, homohexamer. Requires Mg(2+) as cofactor.

It is found in the cytoplasm. It catalyses the reaction diphosphate + H2O = 2 phosphate + H(+). Its function is as follows. Catalyzes the hydrolysis of inorganic pyrophosphate (PPi) forming two phosphate ions. In Saccharolobus solfataricus (strain ATCC 35092 / DSM 1617 / JCM 11322 / P2) (Sulfolobus solfataricus), this protein is Inorganic pyrophosphatase.